We begin with the raw amino-acid sequence, 362 residues long: Serpentine receptor class epsilon-37 (362 aa).

7 helical membrane-spanning segments follow: residues Ile-29–Val-49, Ile-67–Ile-87, Ile-127–Ala-147, Ile-170–Thr-190, Ile-204–Trp-224, Leu-260–Phe-280, and Phe-288–Leu-308.

This sequence belongs to the nematode receptor-like protein sre family.

It is found in the membrane. This chain is Serpentine receptor class epsilon-37 (sre-37), found in Caenorhabditis elegans.